The primary structure comprises 209 residues: MRQHVNPLSINFNQIERIPSLGEMFGDSKLNLHLDIGCAAGEFLFDLALVNTSWNYLGIEIREKLVKNAKLKVLESEIKNLYFLFGNANNILNDVQSELIIKNLKSISFYFPDPWFKKRHYKRRVIQPEFINILSNLLQKGTLIFIKTDVKDLFDYMDYTISNNFYFKTIDKKDFNYSESFNPNKVKTNREKYVINNQLDIFERIYIKI.

S-adenosyl-L-methionine is bound by residues Asp-35, Glu-60, Asn-87, and Asp-113. The active site involves Asp-113. Substrate-binding residues include Lys-117 and Asp-149.

The protein belongs to the class I-like SAM-binding methyltransferase superfamily. TrmB family.

The enzyme catalyses guanosine(46) in tRNA + S-adenosyl-L-methionine = N(7)-methylguanosine(46) in tRNA + S-adenosyl-L-homocysteine. The protein operates within tRNA modification; N(7)-methylguanine-tRNA biosynthesis. Catalyzes the formation of N(7)-methylguanine at position 46 (m7G46) in tRNA. This is tRNA (guanine-N(7)-)-methyltransferase from Prochlorococcus marinus (strain AS9601).